The sequence spans 1063 residues: Presequence protease, mitochondrial (1063 aa).

The N-terminal 33 residues, 1–33, are a transit peptide targeting the mitochondrion; sequence MLRLANRVSRKDSGNLGIAQLKKRLLATSGVSQ. His-105 lines the Zn(2+) pocket. The Proton acceptor role is filled by Glu-108. Position 109 (His-109) interacts with Zn(2+). Glu-181 is a catalytic residue. Glu-206 contacts Zn(2+).

It belongs to the peptidase M16 family. PreP subfamily. In terms of assembly, monomer and homodimer; homodimerization is induced by binding of the substrate. Zn(2+) serves as cofactor.

The protein localises to the mitochondrion intermembrane space. Its subcellular location is the mitochondrion matrix. Its function is as follows. Degrades mitochondrial transit peptides after their cleavage in the intermembrane space or in the matrix, and presequence peptides; clearance of these peptides is required to keep the presequence processing machinery running. Preferentially cleaves the N-terminal side of paired basic amino acid residues. Also degrades other unstructured peptides. May function as an ATP-dependent peptidase as opposed to a metalloendopeptidase. The protein is Presequence protease, mitochondrial (CYM1) of Debaryomyces hansenii (strain ATCC 36239 / CBS 767 / BCRC 21394 / JCM 1990 / NBRC 0083 / IGC 2968) (Yeast).